A 429-amino-acid polypeptide reads, in one-letter code: Adenylosuccinate synthetase (429 aa).

GTP-binding positions include 12 to 18 (GDEGKGK) and 40 to 42 (GHT). Residue Asp13 is the Proton acceptor of the active site. Mg(2+) contacts are provided by Asp13 and Gly40. Residues 13–16 (DEGK), 38–41 (NAGH), Thr128, Arg142, Gln223, Thr238, and Arg302 each bind IMP. The active-site Proton donor is the His41. 298 to 304 (TVTGRPR) is a binding site for substrate. GTP-binding positions include Arg304, 330 to 332 (LLD), and 412 to 414 (SVG).

This sequence belongs to the adenylosuccinate synthetase family. In terms of assembly, homodimer. It depends on Mg(2+) as a cofactor.

The protein resides in the cytoplasm. It carries out the reaction IMP + L-aspartate + GTP = N(6)-(1,2-dicarboxyethyl)-AMP + GDP + phosphate + 2 H(+). It participates in purine metabolism; AMP biosynthesis via de novo pathway; AMP from IMP: step 1/2. Plays an important role in the de novo pathway of purine nucleotide biosynthesis. Catalyzes the first committed step in the biosynthesis of AMP from IMP. The sequence is that of Adenylosuccinate synthetase from Lactobacillus helveticus (strain DPC 4571).